Here is a 208-residue protein sequence, read N- to C-terminus: N-(5'-phosphoribosyl)anthranilate isomerase (208 aa).

This sequence belongs to the TrpF family.

It catalyses the reaction N-(5-phospho-beta-D-ribosyl)anthranilate = 1-(2-carboxyphenylamino)-1-deoxy-D-ribulose 5-phosphate. The protein operates within amino-acid biosynthesis; L-tryptophan biosynthesis; L-tryptophan from chorismate: step 3/5. This Neisseria meningitidis serogroup C / serotype 2a (strain ATCC 700532 / DSM 15464 / FAM18) protein is N-(5'-phosphoribosyl)anthranilate isomerase.